The primary structure comprises 592 residues: uncharacterized protein (592 aa).

A run of 6 helical transmembrane segments spans residues 12 to 32, 58 to 78, 102 to 122, 191 to 211, 214 to 234, and 299 to 319; these read IWIL…IFLL, PILF…ISLV, MGLF…SYYL, ISYT…GVEI, MMVF…FWLG, and FSGF…LIQV. One can recognise an ABC transmembrane type-1 domain in the interval 58–358; the sequence is PILFFLLIVA…FRSTYDNFAS (301 aa). The 202-residue stretch at 391-592 folds into the ABC transporter domain; the sequence is VIFKNLSIQN…LQDKGQWQVL (202 aa). 424–431 is a binding site for ATP; that stretch reads GKSGAGKT.

It belongs to the ABC transporter superfamily.

The protein resides in the cell inner membrane. This is an uncharacterized protein from Haemophilus influenzae (strain ATCC 51907 / DSM 11121 / KW20 / Rd).